A 167-amino-acid polypeptide reads, in one-letter code: Ribosome maturation factor RimM (167 aa).

Positions 94-165 constitute a PRC barrel domain; the sequence is EHEYYYSDII…TIKITPMEGL (72 aa).

Belongs to the RimM family. Binds ribosomal protein uS19.

The protein localises to the cytoplasm. In terms of biological role, an accessory protein needed during the final step in the assembly of 30S ribosomal subunit, possibly for assembly of the head region. Essential for efficient processing of 16S rRNA. May be needed both before and after RbfA during the maturation of 16S rRNA. It has affinity for free ribosomal 30S subunits but not for 70S ribosomes. The polypeptide is Ribosome maturation factor RimM (Staphylococcus epidermidis (strain ATCC 35984 / DSM 28319 / BCRC 17069 / CCUG 31568 / BM 3577 / RP62A)).